A 373-amino-acid polypeptide reads, in one-letter code: Type II secretion system protein L (373 aa).

Residues 1 to 214 (MTAWRDTLGR…RRSDPMQRWN (214 aa)) are Cytoplasmic-facing. A helical transmembrane segment spans residues 215–233 (LLLAVAALVLLAVAGWLLL). Residues 234 to 373 (DNRRQAADDL…AKEAADAAQR (140 aa)) lie on the Periplasmic side of the membrane.

This sequence belongs to the GSP L family. In terms of assembly, type II secretion system is composed of four main components: the outer membrane complex, the inner membrane complex, the cytoplasmic secretion ATPase and the periplasm-spanning pseudopilus. Forms homodimers. Interacts with XpsM/GspM. Interacts with XpsE/GspE and XpsF/GspF.

It localises to the cell inner membrane. In terms of biological role, inner membrane component of the type II secretion system required for the energy-dependent secretion of extracellular factors such as proteases and toxins from the periplasm. Plays a role in the complex assembly and recruits XpsM resulting in a stable complex in the inner membrane. Provides thus a link between the energy-providing XpsE protein in the cytoplasm and the rest of the T2SS machinery. The protein is Type II secretion system protein L (pefL) of Xanthomonas campestris pv. campestris (strain ATCC 33913 / DSM 3586 / NCPPB 528 / LMG 568 / P 25).